The chain runs to 239 residues: NADH-quinone oxidoreductase chain 2 (239 aa).

[2Fe-2S] cluster contacts are provided by Cys96, Cys101, Cys137, and Cys141.

Belongs to the complex I 24 kDa subunit family. In terms of assembly, NDH-1 is composed of at least 14 different subunits, Nqo1 to Nqo14. The complex has a L-shaped structure, with the hydrophobic arm (subunits Nqo7, Nqo8, Nqo10 to Nqo14) embedded in the inner membrane and the hydrophilic peripheral arm (subunits Nqo1 to Nqo6, Nqo9) protruding into the bacterial cytoplasm. The hydrophilic domain contains all the redox centers. [2Fe-2S] cluster serves as cofactor.

It localises to the cell inner membrane. The enzyme catalyses a quinone + NADH + 5 H(+)(in) = a quinol + NAD(+) + 4 H(+)(out). In terms of biological role, NDH-1 shuttles electrons from NADH, via FMN and iron-sulfur (Fe-S) centers, to quinones in the respiratory chain. The immediate electron acceptor for the enzyme in this species is believed to be ubiquinone. Couples the redox reaction to proton translocation (for every two electrons transferred, four hydrogen ions are translocated across the cytoplasmic membrane), and thus conserves the redox energy in a proton gradient. The chain is NADH-quinone oxidoreductase chain 2 (nqo2) from Paracoccus denitrificans.